The primary structure comprises 72 residues: MAKEDAIELQGTVLDTLPNTMFRVELENGHVVTAHISGKMRKNYIRILTGDKVTVEMTPYDLSKGRIVFRAR.

One can recognise an S1-like domain in the interval 1–72 (MAKEDAIELQ…SKGRIVFRAR (72 aa)).

The protein belongs to the IF-1 family. In terms of assembly, component of the 30S ribosomal translation pre-initiation complex which assembles on the 30S ribosome in the order IF-2 and IF-3, IF-1 and N-formylmethionyl-tRNA(fMet); mRNA recruitment can occur at any time during PIC assembly.

The protein resides in the cytoplasm. Functionally, one of the essential components for the initiation of protein synthesis. Stabilizes the binding of IF-2 and IF-3 on the 30S subunit to which N-formylmethionyl-tRNA(fMet) subsequently binds. Helps modulate mRNA selection, yielding the 30S pre-initiation complex (PIC). Upon addition of the 50S ribosomal subunit IF-1, IF-2 and IF-3 are released leaving the mature 70S translation initiation complex. This Aliivibrio fischeri (strain ATCC 700601 / ES114) (Vibrio fischeri) protein is Translation initiation factor IF-1.